The following is a 970-amino-acid chain: Phosphoenolpyruvate carboxylase 1 (970 aa).

At Ser-15 the chain carries Phosphoserine. Catalysis depends on residues His-177, Lys-606, and Arg-647.

It belongs to the PEPCase type 1 family. Homotetramer. Mg(2+) serves as cofactor.

The protein resides in the cytoplasm. The enzyme catalyses oxaloacetate + phosphate = phosphoenolpyruvate + hydrogencarbonate. Its pathway is photosynthesis; C4 acid pathway. By light-reversible phosphorylation. In terms of biological role, through the carboxylation of phosphoenolpyruvate (PEP) it forms oxaloacetate, a four-carbon dicarboxylic acid source for the tricarboxylic acid cycle. In Zea mays (Maize), this protein is Phosphoenolpyruvate carboxylase 1 (PEP1).